A 476-amino-acid polypeptide reads, in one-letter code: Scopoletin glucosyltransferase (476 aa).

His-16 serves as the catalytic Proton acceptor. Position 16 (His-16) interacts with an anthocyanidin. Residue Asp-119 is the Charge relay of the active site. UDP-alpha-D-glucose is bound by residues Ala-343, Gln-345, His-360, Trp-363, Asn-364, Ser-365, and Glu-368. An an anthocyanidin-binding site is contributed by Ala-383. The UDP-alpha-D-glucose site is built by Glu-384 and Gln-385.

This sequence belongs to the UDP-glycosyltransferase family.

The catalysed reaction is scopoletin + UDP-alpha-D-glucose = scopolin + UDP + H(+). Glucosyltransferase acting preferentially on aromatic substrates of the phenylpropanoid types. The best substrates are scopoletin and esculetin. Required for full resistance to virus. This Nicotiana tabacum (Common tobacco) protein is Scopoletin glucosyltransferase (TOGT1).